The chain runs to 464 residues: Argininosuccinate lyase (464 aa).

The protein belongs to the lyase 1 family. Argininosuccinate lyase subfamily.

It localises to the cytoplasm. The catalysed reaction is 2-(N(omega)-L-arginino)succinate = fumarate + L-arginine. It participates in amino-acid biosynthesis; L-arginine biosynthesis; L-arginine from L-ornithine and carbamoyl phosphate: step 3/3. The sequence is that of Argininosuccinate lyase from Chlorobium phaeobacteroides (strain DSM 266 / SMG 266 / 2430).